A 188-amino-acid chain; its full sequence is Antitoxin SocA (188 aa).

Interacts with cognate toxin SocB and with ClpX.

Its function is as follows. Antitoxin component of an atypical type II toxin-antitoxin (TA) system. Unlike most type II TA systems, neutralizes the toxic activity of cognate toxin SocB by acting as an adapter to promote its degradation by ClpXP; degradation is dependent on the N-terminus of ClpX. The chain is Antitoxin SocA from Caulobacter vibrioides (strain NA1000 / CB15N) (Caulobacter crescentus).